Here is a 244-residue protein sequence, read N- to C-terminus: Neurogenin-1 (244 aa).

Disordered regions lie at residues Met1 to Leu27 and Leu39 to Arg82. Residues Ser10–Leu27 show a composition bias toward low complexity. Residues Ser93 to Leu145 form the bHLH domain.

As to quaternary structure, efficient DNA binding requires dimerization with another bHLH protein. As to expression, expression restricted to the embryonic nervous system.

The protein localises to the nucleus. In terms of biological role, acts as a transcriptional regulator. Involved in the initiation of neuronal differentiation. Activates transcription by binding to the E box (5'-CANNTG-3'). Associates with chromatin to enhancer regulatory elements in genes encoding key transcriptional regulators of neurogenesis. This is Neurogenin-1 (Neurog1) from Mus musculus (Mouse).